The primary structure comprises 542 residues: Chaperonin GroEL (542 aa).

ATP contacts are provided by residues 29–32 (TLGP), 86–90 (DGTTT), Gly-413, 476–478 (NAA), and Asp-492.

It belongs to the chaperonin (HSP60) family. Forms a cylinder of 14 subunits composed of two heptameric rings stacked back-to-back. Interacts with the co-chaperonin GroES.

The protein localises to the cytoplasm. It carries out the reaction ATP + H2O + a folded polypeptide = ADP + phosphate + an unfolded polypeptide.. In terms of biological role, together with its co-chaperonin GroES, plays an essential role in assisting protein folding. The GroEL-GroES system forms a nano-cage that allows encapsulation of the non-native substrate proteins and provides a physical environment optimized to promote and accelerate protein folding. The protein is Chaperonin GroEL of Lactococcus lactis subsp. lactis (strain IL1403) (Streptococcus lactis).